A 96-amino-acid chain; its full sequence is Co-chaperonin GroES (96 aa).

Belongs to the GroES chaperonin family. Heptamer of 7 subunits arranged in a ring. Interacts with the chaperonin GroEL.

It localises to the cytoplasm. In terms of biological role, together with the chaperonin GroEL, plays an essential role in assisting protein folding. The GroEL-GroES system forms a nano-cage that allows encapsulation of the non-native substrate proteins and provides a physical environment optimized to promote and accelerate protein folding. GroES binds to the apical surface of the GroEL ring, thereby capping the opening of the GroEL channel. In Methylibium petroleiphilum (strain ATCC BAA-1232 / LMG 22953 / PM1), this protein is Co-chaperonin GroES.